We begin with the raw amino-acid sequence, 37 residues long: Cytochrome b6-f complex subunit 5 (37 aa).

Residues 5–25 (LLSGIVLGLVPITLAGLFVTA) traverse the membrane as a helical segment.

Belongs to the PetG family. As to quaternary structure, the 4 large subunits of the cytochrome b6-f complex are cytochrome b6, subunit IV (17 kDa polypeptide, PetD), cytochrome f and the Rieske protein, while the 4 small subunits are PetG, PetL, PetM and PetN. The complex functions as a dimer.

The protein localises to the plastid. It is found in the chloroplast thylakoid membrane. Functionally, component of the cytochrome b6-f complex, which mediates electron transfer between photosystem II (PSII) and photosystem I (PSI), cyclic electron flow around PSI, and state transitions. PetG is required for either the stability or assembly of the cytochrome b6-f complex. This chain is Cytochrome b6-f complex subunit 5, found in Gnetum parvifolium (Small-leaved jointfir).